We begin with the raw amino-acid sequence, 494 residues long: Tripartite motif-containing protein 5 (494 aa).

The residue at position 2 (Ala2) is an N-acetylalanine. Residues 15-59 (CPICLELLTEPLSLDCGHSFCQACITANHKESTLHQGERSCPLCR) form an RING-type zinc finger. Ser86 is subject to Phosphoserine. The B box-type zinc-finger motif lies at 91–132 (QKVDHCARHGEKLLLFCQQDGNVICWLCERSQEHRGHHTFLV). Residues Cys96, His99, Cys118, and His124 each contribute to the Zn(2+) site. The stretch at 132–223 (VEEVAEKYQG…RLVQSESDMV (92 aa)) forms a coiled coil. Positions 186-199 (FKQLRDILDCEESK) are required for interaction with GABARAP and for autophagy. One can recognise a B30.2/SPRY domain in the interval 280 to 494 (PDLKGMLQAF…LPMTLCSPSS (215 aa)).

Belongs to the TRIM/RBCC family. Can form homodimers and homotrimers. In addition to lower-order dimerization, also exhibits a higher-order multimerization and both low- and high-order multimerizations are essential for its restriction activity. Interacts with BTBD1 and BTBD2. Interacts with PSMC4, PSMC5, PSMD7 and HSPA8/HSC70. Interacts (via B30.2/SPRY domain) with HSPA1A/B. Interacts with PSMC2, MAP3K7/TAK1, TAB2 and TAB3. Interacts with SQSTM1. Interacts with TRIM6 and TRIM34. Interacts with ULK1 (phosphorylated form), GABARAP, GABARAPL1, GABARAPL2, MAP1LC3A, MAP1LC3C and BECN1. Degraded in a proteasome-independent fashion in the absence of viral infection but in a proteasome-dependent fashion following exposure to restriction sensitive virus. Post-translationally, autoubiquitinated in a RING finger- and UBE2D2-dependent manner. Monoubiquitinated by TRIM21. Deubiquitinated by Yersinia YopJ. Ubiquitination may not lead to proteasomal degradation.

It localises to the cytoplasm. The protein resides in the nucleus. It carries out the reaction S-ubiquitinyl-[E2 ubiquitin-conjugating enzyme]-L-cysteine + [acceptor protein]-L-lysine = [E2 ubiquitin-conjugating enzyme]-L-cysteine + N(6)-ubiquitinyl-[acceptor protein]-L-lysine.. Its pathway is protein modification; protein ubiquitination. Its function is as follows. Capsid-specific restriction factor that prevents infection from non-host-adapted retroviruses. Blocks viral replication early in the life cycle, after viral entry but before reverse transcription. In addition to acting as a capsid-specific restriction factor, also acts as a pattern recognition receptor that activates innate immune signaling in response to the retroviral capsid lattice. Binding to the viral capsid triggers its E3 ubiquitin ligase activity, and in concert with the heterodimeric ubiquitin conjugating enzyme complex UBE2V1-UBE2N (also known as UBC13-UEV1A complex) generates 'Lys-63'-linked polyubiquitin chains, which in turn are catalysts in the autophosphorylation of the MAP3K7/TAK1 complex (includes TAK1, TAB2, and TAB3). Activation of the MAP3K7/TAK1 complex by autophosphorylation results in the induction and expression of NF-kappa-B and MAPK-responsive inflammatory genes, thereby leading to an innate immune response in the infected cell. Plays a role in regulating autophagy through activation of autophagy regulator BECN1 by causing its dissociation from its inhibitors BCL2 and TAB2. The chain is Tripartite motif-containing protein 5 (TRIM5) from Cebuella pygmaea (Pygmy marmoset).